The primary structure comprises 160 residues: MEIVSKLTLKTIGAQPKPHSVKENTALASIYGRVRGKKVGQSTFGDFIKFEGEFEGVNIATGEVFRSGALILPKVLESLLAGAVDGENTVDFAVEIWAKPSEKGNTGYEYGVKPLIEPAASDELAALRNQVKAALPAPAAAGEAAAEAKPAAKAKAKAEA.

Binds to single-stranded DNA (ssDNA). Has a regulatory effect on phage DNA metabolism and transcription of early genes. The protein is Single-stranded DNA-binding protein (XII) of Enterobacteria phage PRD1 (Bacteriophage PRD1).